Here is a 79-residue protein sequence, read N- to C-terminus: MTLVMGSCCGRFCDAKNKFKKDDIEEEGEGYCDYKNLNDLDEATRIEFGPLYIINEEKSDINTLDIKRRYRHAIESVYF.

It belongs to the orthopoxvirus OPG051 family.

The protein is Protein OPG051 (OPG051) of Variola virus (isolate Human/India/Ind3/1967) (VARV).